The sequence spans 273 residues: NH(3)-dependent NAD(+) synthetase (273 aa).

47-54 (GISGGQDS) serves as a coordination point for ATP. Asp-53 is a Mg(2+) binding site. Arg-139 serves as a coordination point for deamido-NAD(+). Position 159 (Thr-159) interacts with ATP. Residue Glu-164 participates in Mg(2+) binding. Residues Lys-172 and Asp-179 each coordinate deamido-NAD(+). ATP-binding residues include Lys-188 and Thr-210. Residue 259–260 (HK) coordinates deamido-NAD(+).

The protein belongs to the NAD synthetase family. Homodimer.

The catalysed reaction is deamido-NAD(+) + NH4(+) + ATP = AMP + diphosphate + NAD(+) + H(+). Its pathway is cofactor biosynthesis; NAD(+) biosynthesis; NAD(+) from deamido-NAD(+) (ammonia route): step 1/1. Catalyzes the ATP-dependent amidation of deamido-NAD to form NAD. Uses ammonia as a nitrogen source. This chain is NH(3)-dependent NAD(+) synthetase, found in Staphylococcus aureus (strain MRSA252).